The primary structure comprises 353 residues: Photosystem II D2 protein (353 aa).

T2 is modified (N-acetylthreonine). At T2 the chain carries Phosphothreonine. The helical transmembrane segment at 41–61 (CAYFALGGWFTGTTFVTSWYT) threads the bilayer. Residue H118 coordinates chlorophyll a. The helical transmembrane segment at 125 to 141 (GFMLRQFELARSVQLRP) threads the bilayer. Residues Q130 and N143 each coordinate pheophytin a. A helical membrane pass occupies residues 153–166 (VFVSVFLIYPLGQS). Chlorophyll a is bound at residue H198. A helical transmembrane segment spans residues 208–228 (AALLCAIHGATVENLYFEDGD). H215 and F262 together coordinate a plastoquinone. Residue H215 coordinates Fe cation. H269 contributes to the Fe cation binding site. Residues 279–295 (GLWMSALGVVGLALNLR) form a helical membrane-spanning segment.

This sequence belongs to the reaction center PufL/M/PsbA/D family. PSII is composed of 1 copy each of membrane proteins PsbA, PsbB, PsbC, PsbD, PsbE, PsbF, PsbH, PsbI, PsbJ, PsbK, PsbL, PsbM, PsbT, PsbX, PsbY, PsbZ, Psb30/Ycf12, at least 3 peripheral proteins of the oxygen-evolving complex and a large number of cofactors. It forms dimeric complexes. The D1/D2 heterodimer binds P680, chlorophylls that are the primary electron donor of PSII, and subsequent electron acceptors. It shares a non-heme iron and each subunit binds pheophytin, quinone, additional chlorophylls, carotenoids and lipids. There is also a Cl(-1) ion associated with D1 and D2, which is required for oxygen evolution. The PSII complex binds additional chlorophylls, carotenoids and specific lipids. serves as cofactor.

The protein resides in the plastid. Its subcellular location is the chloroplast thylakoid membrane. It catalyses the reaction 2 a plastoquinone + 4 hnu + 2 H2O = 2 a plastoquinol + O2. Functionally, photosystem II (PSII) is a light-driven water:plastoquinone oxidoreductase that uses light energy to abstract electrons from H(2)O, generating O(2) and a proton gradient subsequently used for ATP formation. It consists of a core antenna complex that captures photons, and an electron transfer chain that converts photonic excitation into a charge separation. The D1/D2 (PsbA/PsbD) reaction center heterodimer binds P680, the primary electron donor of PSII as well as several subsequent electron acceptors. D2 is needed for assembly of a stable PSII complex. The sequence is that of Photosystem II D2 protein from Panax ginseng (Korean ginseng).